The sequence spans 360 residues: Protein phosphatase 1L (360 aa).

Over Met-1–Thr-25 the chain is Extracellular. Residues Leu-26–Thr-42 form a helical membrane-spanning segment. Over Asp-43–Gln-360 the chain is Cytoplasmic. The 260-residue stretch at Asn-92–Phe-351 folds into the PPM-type phosphatase domain. Residues Asp-128, Gly-129, Asp-302, and Asp-342 each contribute to the Mn(2+) site.

It belongs to the PP2C family. In terms of assembly, interacts with MAP3K7/TAK1 and MAP3K5. The cofactor is Mg(2+). Mn(2+) serves as cofactor.

The protein resides in the membrane. It carries out the reaction O-phospho-L-seryl-[protein] + H2O = L-seryl-[protein] + phosphate. The enzyme catalyses O-phospho-L-threonyl-[protein] + H2O = L-threonyl-[protein] + phosphate. Its function is as follows. Acts as a suppressor of the SAPK signaling pathways by associating with and dephosphorylating MAP3K7/TAK1 and MAP3K5, and by attenuating the association between MAP3K7/TAK1 and MAP2K4 or MAP2K6. The sequence is that of Protein phosphatase 1L (PPM1L) from Bos taurus (Bovine).